The following is a 452-amino-acid chain: Trigger factor (452 aa).

A PPIase FKBP-type domain is found at 170–255 (GDRVTIDFTG…VKSVAAPGPL (86 aa)).

This sequence belongs to the FKBP-type PPIase family. Tig subfamily.

Its subcellular location is the cytoplasm. The enzyme catalyses [protein]-peptidylproline (omega=180) = [protein]-peptidylproline (omega=0). Involved in protein export. Acts as a chaperone by maintaining the newly synthesized protein in an open conformation. Functions as a peptidyl-prolyl cis-trans isomerase. The protein is Trigger factor of Xanthobacter autotrophicus (strain ATCC BAA-1158 / Py2).